The following is a 305-amino-acid chain: Sulfate adenylyltransferase subunit 2 (305 aa).

This sequence belongs to the PAPS reductase family. CysD subfamily. Heterodimer composed of CysD, the smaller subunit, and CysN.

The catalysed reaction is sulfate + ATP + H(+) = adenosine 5'-phosphosulfate + diphosphate. It functions in the pathway sulfur metabolism; hydrogen sulfide biosynthesis; sulfite from sulfate: step 1/3. With CysN forms the ATP sulfurylase (ATPS) that catalyzes the adenylation of sulfate producing adenosine 5'-phosphosulfate (APS) and diphosphate, the first enzymatic step in sulfur assimilation pathway. APS synthesis involves the formation of a high-energy phosphoric-sulfuric acid anhydride bond driven by GTP hydrolysis by CysN coupled to ATP hydrolysis by CysD. The sequence is that of Sulfate adenylyltransferase subunit 2 from Pseudomonas entomophila (strain L48).